The sequence spans 518 residues: Arrestin-related trafficking adapter 10 (518 aa).

K118 is covalently cross-linked (Glycyl lysine isopeptide (Lys-Gly) (interchain with G-Cter in ubiquitin)).

Belongs to the ART10 family. In terms of assembly, interacts with RSP5. Post-translationally, ubiquitinated by RSP5.

Its subcellular location is the cytoplasm. Functionally, may regulate endocytosis by recruiting RSP5 ubiquitin ligase activity to specific plasma membrane proteins in response to extracellular stimuli. In Saccharomyces cerevisiae (strain ATCC 204508 / S288c) (Baker's yeast), this protein is Arrestin-related trafficking adapter 10 (ART10).